Reading from the N-terminus, the 69-residue chain is Pleurain-A1 (69 aa).

The signal sequence occupies residues 1–18 (MFTLKKTLLLLFFLGTIS). Positions 19-43 (ISLCKQERDADEDDGRKMTEEEVKR) are excised as a propeptide. A disulfide bridge links Cys-63 with Cys-69.

In terms of tissue distribution, expressed by the skin glands.

It localises to the secreted. Antimicrobial peptide. Has activity against the Gram-positive bacterium S.aureus ATCC2592 (MIC=15 ug/ml), the Gram-negative bacteria E.coli ATCC25922 (MIC=60 ug/ml), B.dysenteriae (MIC=120 ug/ml), H.pylori NTCT11637 (MIC=30 ug/ml), and the fungus C.albicans ATCC2002 (MIC=30 ug/ml). Has little hemolytic activity on rabbit red blood cells. The sequence is that of Pleurain-A1 from Nidirana pleuraden (Yunnan pond frog).